We begin with the raw amino-acid sequence, 158 residues long: MSGFIGKEQHAIDDKGRLMIPARFRRRMTVVPDESLKSSRGSASDAGGLYVMKVPDGSLELYEPSVWAEKEQAIVRLSDFNPDERLLKTLLYESLDCVEMDRQGRIALSREFLQHAGISRDVVIVGANVKMILWAPEKLSKVVRDNASRFQVLAGRYF.

SpoVT-AbrB domains follow at residues 7–66 (KEQH…EPSV) and 95–138 (LDCV…APEK).

This sequence belongs to the MraZ family. Forms oligomers.

The protein resides in the cytoplasm. The protein localises to the nucleoid. This chain is Transcriptional regulator MraZ, found in Prosthecochloris aestuarii (strain DSM 271 / SK 413).